The sequence spans 336 residues: DNA topoisomerase 1B (336 aa).

The 258-residue stretch at 79 to 336 (EIHIQGAEKE…KSYRKDVLGE (258 aa)) folds into the Topo IB-type catalytic domain. The O-(3'-phospho-DNA)-tyrosine intermediate role is filled by Y294.

Belongs to the type IB topoisomerase family. As to quaternary structure, monomer.

The protein resides in the virion. It carries out the reaction ATP-independent breakage of single-stranded DNA, followed by passage and rejoining.. Functionally, releases the supercoiling and torsional tension of DNA introduced during the DNA replication and transcription by transiently cleaving and rejoining one strand of the DNA duplex. Introduces a single-strand break via transesterification at a target site in duplex DNA. The scissile phosphodiester is attacked by the catalytic tyrosine of the enzyme, resulting in the formation of a DNA-(3'-phosphotyrosyl)-enzyme intermediate and the expulsion of a 5'-OH DNA strand. The free DNA strand then undergoes passage around the unbroken strand thus removing DNA supercoils. Finally, in the religation step, the DNA 5'-OH attacks the covalent intermediate to expel the active-site tyrosine and restore the DNA phosphodiester backbone. Cleaves DNA after CCCTT sequence. This chain is DNA topoisomerase 1B (TOP1E), found in Acanthamoeba polyphaga mimivirus (APMV).